Reading from the N-terminus, the 85-residue chain is uncharacterized protein (85 aa).

A signal peptide spans 1-21 (MRPLLCALAGLALLCAVGALA). Over residues 22–35 (DGREDRGSPGDTGE) the composition is skewed to basic and acidic residues. A disordered region spans residues 22-85 (DGREDRGSPG…EVVHLPGSTL (64 aa)). Positions 36–51 (RPAGPARGPGLEPARG) are enriched in low complexity.

The protein resides in the secreted. This is an uncharacterized protein from Homo sapiens (Human).